Consider the following 816-residue polypeptide: H(+)/Cl(-) exchange transporter 5 (816 aa).

The tract at residues 1 to 26 is disordered; the sequence is MAMWQGAMDNRGFQQGSFSSFQNSSS. Topologically, residues 1–124 are cytoplasmic; the sequence is MAMWQGAMDN…WALIHSVSDA (124 aa). The segment covering 12-25 has biased composition (low complexity); it reads GFQQGSFSSFQNSS. Helical transmembrane passes span 125–162 and 208–231; these read FSGW…ICTG and VNYF…VKVF. The Selectivity filter part_1 signature appears at 237–241; it reads GSGIP. Residue S238 participates in chloride binding. An intramembrane region (helical) is located at residues 240–247; that stretch reads IPEIKTIL. The next 2 helical transmembrane spans lie at 256–275 and 281–300; these read LGKW…VSSG and EGPL…HCFN. The Selectivity filter part_2 motif lies at 279–283; sequence GKEGP. Intramembrane regions (helical) lie at residues 312-324 and 328-336; these read VLSA…VSVA and PIGGVLFSL. 5 helical membrane-spanning segments follow: residues 348-366, 389-415, 422-442, 498-518, and 523-542; these read LWRS…RSIN, LVPF…AWCR, LGKY…ILAF, MWQL…TFGM, and GLFI…LGVG. The Selectivity filter part_3 motif lies at 523-527; the sequence is GLFIP. F525 is a chloride binding site. The helical intramembrane region spans 570–584; that stretch reads GLYAMVGAAACLGGV. The segment at residues 585–587 is an intramembrane region (note=Loop between two helices); it reads TRM. Positions 588–599 form an intramembrane region, helical; that stretch reads TVSLVVIMFELT. The segment at residues 600–604 is an intramembrane region (note=Loop between two helices); that stretch reads GGLEY. Residues 605-622 form a helical membrane-spanning segment; that stretch reads IVPLMAAAMTSKWVADAL. The Cytoplasmic segment spans residues 623–816; the sequence is GREGIYDAHI…NQDPDSILFN (194 aa). Position 628 (Y628) interacts with chloride. CBS domains are found at residues 656–720 and 752–812; these read MKPR…ARKK and ILDL…DPDS. ATP is bound by residues T666, 687 to 689, and 794 to 797; these read YSG and TKKD.

It belongs to the chloride channel (TC 2.A.49) family. ClC-5/CLCN5 subfamily. In terms of assembly, interacts with NEDD4 and NEDD4L. In terms of processing, ubiquitinated by NEDD4L in the presence of albumin; which promotes endocytosis and proteasomal degradation. As to expression, kidney. Moderately expressed in aortic vascular smooth muscle and endothelial cells, and at a slightly higher level in the coronary vascular smooth muscle.

The protein localises to the golgi apparatus membrane. It is found in the endosome membrane. The protein resides in the cell membrane. It carries out the reaction 2 chloride(in) + H(+)(out) = 2 chloride(out) + H(+)(in). Proton-coupled chloride transporter. Functions as antiport system and exchanges chloride ions against protons. Important for normal acidification of the endosome lumen. May play an important role in renal tubular function. The CLC channel family contains both chloride channels and proton-coupled anion transporters that exchange chloride or another anion for protons. The absence of conserved gating glutamate residues is typical for family members that function as channels. In Homo sapiens (Human), this protein is H(+)/Cl(-) exchange transporter 5.